The sequence spans 769 residues: Cullin-3 (769 aa).

The segment at 614 to 655 (DRELPSTTSSTTTTTTTATSSSTSTSPSSSSSSISTPTPSKS) is disordered. Over residues 618 to 653 (PSTTSSTTTTTTTATSSSTSTSPSSSSSSISTPTPS) the composition is skewed to low complexity. A Cullin neddylation domain is found at 699–761 (DRKHQIEASI…REYLERSKQD (63 aa)). A Glycyl lysine isopeptide (Lys-Gly) (interchain with G-Cter in NEDD8) cross-link involves residue Lys713.

It belongs to the cullin family. Neddylated. Deneddylated via its interaction with the COP9 signalosome (CSN) complex.

It is found in the nucleus. It functions in the pathway protein modification; protein ubiquitination. Probable core component of cullin-based SCF-like E3 ubiquitin-protein ligase complexes which mediate the ubiquitination and subsequent proteasomal degradation of target proteins. The E3 ubiquitin-protein ligase activity of the complex is dependent on the neddylation of the cullin subunit. In Dictyostelium discoideum (Social amoeba), this protein is Cullin-3 (culC).